The following is a 164-amino-acid chain: Peptide deformylase-like (164 aa).

Glu-133 is a catalytic residue.

Belongs to the polypeptide deformylase family.

The sequence is that of Peptide deformylase-like from Agrobacterium fabrum (strain C58 / ATCC 33970) (Agrobacterium tumefaciens (strain C58)).